The primary structure comprises 615 residues: DNA mismatch repair protein MutL (615 aa).

The tract at residues 363 to 397 (FAEPAAREPVAPRYTPAPASGSRPAAPWPNAQPGY) is disordered. Residues 364 to 391 (AEPAAREPVAPRYTPAPASGSRPAAPWP) are compositionally biased toward low complexity.

Belongs to the DNA mismatch repair MutL/HexB family.

In terms of biological role, this protein is involved in the repair of mismatches in DNA. It is required for dam-dependent methyl-directed DNA mismatch repair. May act as a 'molecular matchmaker', a protein that promotes the formation of a stable complex between two or more DNA-binding proteins in an ATP-dependent manner without itself being part of a final effector complex. In Escherichia coli O9:H4 (strain HS), this protein is DNA mismatch repair protein MutL.